We begin with the raw amino-acid sequence, 255 residues long: Alkaline ceramidase (255 aa).

Topologically, residues 1–28 (MADGISSFWGPVTSTIECCEMNYAYSSY) are lumenal. Residues 29-49 (IAEFYNTISNVPGILLALIGL) traverse the membrane as a helical segment. At 50-60 (VNALRQRFEKR) the chain is on the cytoplasmic side. A helical transmembrane segment spans residues 61 to 81 (FSILHISNMILAIGSMLYHAT). His-79 lines the Zn(2+) pocket. The Lumenal segment spans residues 82–91 (LQHVQQQSDE). The helical transmembrane segment at 92-112 (TPMVWEILLYMYILYSPDWHY) threads the bilayer. Residues 113–118 (RSTMPT) are Cytoplasmic-facing. 2 helical membrane-spanning segments follow: residues 119 to 139 (FLFLYGAAFAIVHAYLRFGIG) and 140 to 160 (FKVHYVILCLLCIPRMYKYYI). At 161–169 (HTEDTAAKR) the chain is on the cytoplasmic side. Residues 170 to 192 (IAKWYVATILVGSICWFCDRVFC) traverse the membrane as a helical segment. The Lumenal segment spans residues 193 to 205 (KTISQWPVNPQGH). 2 residues coordinate Zn(2+): His-205 and His-209. A helical membrane pass occupies residues 206 to 226 (ALWHVFMSFNSYCANTFLMFC). The Cytoplasmic segment spans residues 227 to 255 (RAQQRGWNPKVKYFLGVLPYVKIEKPKTQ).

It belongs to the alkaline ceramidase family. The cofactor is Zn(2+). As to expression, mostly expressed in roots, shoot meristems and pollen, and, to a lower extent, in mature leaves.

Its subcellular location is the endoplasmic reticulum membrane. It localises to the golgi apparatus membrane. Functionally, hydrolyzes only phytoceramide into phytosphingosine and free fatty acid. Does not have reverse activity. Affects plant morphogenesis. Required for the formation of wax layer that ensure cuticle permeability. Implicated in abscisic acid (ABA)-mediated stomatal closure. Involved in both biotic and abiotic stresses. Promotes salt resistance and defenses responses toward pathogenic bacteria (e.g. P.syringae) and against the fungal toxin fumonisin B1 (FB1). This Arabidopsis thaliana (Mouse-ear cress) protein is Alkaline ceramidase.